The primary structure comprises 111 residues: Phosphoribosyl-ATP pyrophosphatase (111 aa).

This sequence belongs to the PRA-PH family.

Its subcellular location is the cytoplasm. The enzyme catalyses 1-(5-phospho-beta-D-ribosyl)-ATP + H2O = 1-(5-phospho-beta-D-ribosyl)-5'-AMP + diphosphate + H(+). It functions in the pathway amino-acid biosynthesis; L-histidine biosynthesis; L-histidine from 5-phospho-alpha-D-ribose 1-diphosphate: step 2/9. This chain is Phosphoribosyl-ATP pyrophosphatase (hisE), found in Azospirillum brasilense.